Reading from the N-terminus, the 880-residue chain is Alanine--tRNA ligase (880 aa).

The Zn(2+) site is built by histidine 566, histidine 570, cysteine 668, and histidine 672.

Belongs to the class-II aminoacyl-tRNA synthetase family. Zn(2+) serves as cofactor.

It localises to the cytoplasm. It carries out the reaction tRNA(Ala) + L-alanine + ATP = L-alanyl-tRNA(Ala) + AMP + diphosphate. Functionally, catalyzes the attachment of alanine to tRNA(Ala) in a two-step reaction: alanine is first activated by ATP to form Ala-AMP and then transferred to the acceptor end of tRNA(Ala). Also edits incorrectly charged Ser-tRNA(Ala) and Gly-tRNA(Ala) via its editing domain. This chain is Alanine--tRNA ligase, found in Nostoc punctiforme (strain ATCC 29133 / PCC 73102).